A 228-amino-acid polypeptide reads, in one-letter code: Heptaprenylglyceryl phosphate synthase (228 aa).

Sn-glycerol 1-phosphate is bound at residue lysine 12. Mg(2+) is bound by residues aspartate 14 and serine 40. Sn-glycerol 1-phosphate-binding positions include 159-164 (YLEYSG), glycine 189, and 209-210 (GN).

The protein belongs to the GGGP/HepGP synthase family. Group I subfamily. As to quaternary structure, homodimer. Mg(2+) serves as cofactor.

It carries out the reaction sn-glycerol 1-phosphate + all-trans-heptaprenyl diphosphate = 3-heptaprenyl-sn-glycero-1-phosphate + diphosphate. Its pathway is membrane lipid metabolism; glycerophospholipid metabolism. Functionally, prenyltransferase that catalyzes in vivo the transfer of the heptaprenyl moiety of heptaprenyl pyrophosphate (HepPP; 35 carbon atoms) to the C3 hydroxyl of sn-glycerol-1-phosphate (G1P), producing heptaprenylglyceryl phosphate (HepGP). This reaction is an ether-bond-formation step in the biosynthesis of archaea-type G1P-based membrane lipids found in Bacillales. In Bacillus licheniformis (strain ATCC 14580 / DSM 13 / JCM 2505 / CCUG 7422 / NBRC 12200 / NCIMB 9375 / NCTC 10341 / NRRL NRS-1264 / Gibson 46), this protein is Heptaprenylglyceryl phosphate synthase.